Here is a 245-residue protein sequence, read N- to C-terminus: Small ribosomal subunit protein uS2 (245 aa).

It belongs to the universal ribosomal protein uS2 family.

The sequence is that of Small ribosomal subunit protein uS2 from Pseudomonas putida (strain W619).